Here is a 157-residue protein sequence, read N- to C-terminus: Small ribosomal subunit protein uS7 (157 aa).

It belongs to the universal ribosomal protein uS7 family. Part of the 30S ribosomal subunit. Contacts proteins S9 and S11.

Functionally, one of the primary rRNA binding proteins, it binds directly to 16S rRNA where it nucleates assembly of the head domain of the 30S subunit. Is located at the subunit interface close to the decoding center, probably blocks exit of the E-site tRNA. This Caldicellulosiruptor bescii (strain ATCC BAA-1888 / DSM 6725 / KCTC 15123 / Z-1320) (Anaerocellum thermophilum) protein is Small ribosomal subunit protein uS7.